The sequence spans 207 residues: Imidazole glycerol phosphate synthase subunit HisH (207 aa).

In terms of domain architecture, Glutamine amidotransferase type-1 spans 1–207; it reads MIAIVDYNMG…ENFTKYRNLK (207 aa). C79 serves as the catalytic Nucleophile. Active-site residues include H185 and E187.

In terms of assembly, heterodimer of HisH and HisF.

The protein resides in the cytoplasm. The enzyme catalyses 5-[(5-phospho-1-deoxy-D-ribulos-1-ylimino)methylamino]-1-(5-phospho-beta-D-ribosyl)imidazole-4-carboxamide + L-glutamine = D-erythro-1-(imidazol-4-yl)glycerol 3-phosphate + 5-amino-1-(5-phospho-beta-D-ribosyl)imidazole-4-carboxamide + L-glutamate + H(+). It catalyses the reaction L-glutamine + H2O = L-glutamate + NH4(+). The protein operates within amino-acid biosynthesis; L-histidine biosynthesis; L-histidine from 5-phospho-alpha-D-ribose 1-diphosphate: step 5/9. Its function is as follows. IGPS catalyzes the conversion of PRFAR and glutamine to IGP, AICAR and glutamate. The HisH subunit catalyzes the hydrolysis of glutamine to glutamate and ammonia as part of the synthesis of IGP and AICAR. The resulting ammonia molecule is channeled to the active site of HisF. The chain is Imidazole glycerol phosphate synthase subunit HisH from Sulfurimonas denitrificans (strain ATCC 33889 / DSM 1251) (Thiomicrospira denitrificans (strain ATCC 33889 / DSM 1251)).